Reading from the N-terminus, the 358-residue chain is Trace amine-associated receptor 7h (358 aa).

Residues 1–47 are Extracellular-facing; the sequence is MATDDESFPWDQDSILSRDLLSALSPQLCYENLNRSCVRSPYSPGPR. N-linked (GlcNAc...) asparagine glycosylation occurs at asparagine 34. 2 cysteine pairs are disulfide-bonded: cysteine 37/cysteine 201 and cysteine 120/cysteine 205. The chain crosses the membrane as a helical span at residues 48–68; that stretch reads LILYAVFGFGAVLAVCGNLLV. At 69–83 the chain is on the cytoplasmic side; the sequence is MTSILHFRQLHSPAN. The helical transmembrane segment at 84 to 104 threads the bilayer; the sequence is FLVASLACADLLVGLTVMPFS. At 105 to 125 the chain is on the extracellular side; it reads MVRSVEGCWYFGDSYCKLHTS. Residues 126–143 form a helical membrane-spanning segment; sequence FDMSFCCSSLLHLCFISV. Residues 144–166 are Cytoplasmic-facing; it reads DRYIAVSDPLIYPIRFTASVSGK. The chain crosses the membrane as a helical span at residues 167–187; it reads CITFSWFLSIIYGFSLIYTGA. At 188–217 the chain is on the extracellular side; it reads SEAGLKDLVSALSCVGGCQIPMNQSCVLIN. Residue asparagine 210 is glycosylated (N-linked (GlcNAc...) asparagine). The chain crosses the membrane as a helical span at residues 218-238; that stretch reads FLLFLVPTLVMMTVYSKIFLI. At 239–274 the chain is on the cytoplasmic side; it reads AKQQAQNMEKMSKQTTRASDSYKDRVAKRERKAAKT. The helical transmembrane segment at 275-295 threads the bilayer; sequence LGIAVAAFLLSWLPYLIDSII. The Extracellular segment spans residues 296–309; sequence DAFLGFITPSYVYE. The helical transmembrane segment at 310–333 threads the bilayer; the sequence is ILVWIVYYNSAMNPLIYAFFYPWF. Residues 334–358 are Cytoplasmic-facing; the sequence is RNAIKLIVTGKILKQNSSTTNLFSE.

It belongs to the G-protein coupled receptor 1 family.

The protein localises to the cell membrane. Functionally, olfactory receptor specific for N,N-dimethylalkylamines trace amines. Trace amine compounds are enriched in animal body fluids and act on trace amine-associated receptors (TAARs) to elicit both intraspecific and interspecific innate behaviors. Ligand-binding causes a conformation change that triggers signaling via G(s)-class of G alpha proteins (GNAL or GNAS). The protein is Trace amine-associated receptor 7h of Rattus norvegicus (Rat).